Reading from the N-terminus, the 130-residue chain is Protein ApaG (130 aa).

The ApaG domain occupies 3-127 (RAVTRHIEVT…FSLDSPDGKR (125 aa)).

In Bradyrhizobium sp. (strain ORS 278), this protein is Protein ApaG.